The sequence spans 364 residues: Carbamoyl phosphate synthase small chain (364 aa).

CPSase stretches follow at residues Met-1–Gly-167 and Met-1–Arg-171. Positions 45, 219, and 221 each coordinate L-glutamine. Positions Arg-171–Lys-358 constitute a Glutamine amidotransferase type-1 domain. Cys-246 (nucleophile) is an active-site residue. Positions 247, 250, 288, 290, and 291 each coordinate L-glutamine. Residues His-331 and Glu-333 contribute to the active site.

It belongs to the CarA family. Composed of two chains; the small (or glutamine) chain promotes the hydrolysis of glutamine to ammonia, which is used by the large (or ammonia) chain to synthesize carbamoyl phosphate. Tetramer of heterodimers (alpha,beta)4.

It catalyses the reaction hydrogencarbonate + L-glutamine + 2 ATP + H2O = carbamoyl phosphate + L-glutamate + 2 ADP + phosphate + 2 H(+). The catalysed reaction is L-glutamine + H2O = L-glutamate + NH4(+). The protein operates within amino-acid biosynthesis; L-arginine biosynthesis; carbamoyl phosphate from bicarbonate: step 1/1. It participates in pyrimidine metabolism; UMP biosynthesis via de novo pathway; (S)-dihydroorotate from bicarbonate: step 1/3. Its function is as follows. Small subunit of the glutamine-dependent carbamoyl phosphate synthetase (CPSase). CPSase catalyzes the formation of carbamoyl phosphate from the ammonia moiety of glutamine, carbonate, and phosphate donated by ATP, constituting the first step of 2 biosynthetic pathways, one leading to arginine and/or urea and the other to pyrimidine nucleotides. The small subunit (glutamine amidotransferase) binds and cleaves glutamine to supply the large subunit with the substrate ammonia. The protein is Carbamoyl phosphate synthase small chain of Bacillus caldolyticus.